Here is a 447-residue protein sequence, read N- to C-terminus: Transcriptional enhancer factor TEF-4 (447 aa).

Disordered stretches follow at residues Met-1 to Ser-46 and Thr-183 to Trp-218. Low complexity predominate over residues Asp-11–Glu-20. Residues Glu-25 to Asp-40 are compositionally biased toward gly residues. A DNA-binding region (TEA) is located at residues Gly-38–Glu-114. The transcriptional activation stretch occupies residues Trp-172–Asp-447. Over residues Thr-183–Ser-206 the composition is skewed to low complexity. Over residues Pro-207–Pro-216 the composition is skewed to pro residues.

As to quaternary structure, interacts with YAP1 and WWTR1/TAZ.

Its subcellular location is the nucleus. In terms of biological role, transcription factor which plays a key role in the Hippo signaling pathway, a pathway involved in organ size control and tumor suppression by restricting proliferation and promoting apoptosis. The core of this pathway is composed of a kinase cascade wherein MST1/MST2, in complex with its regulatory protein SAV1, phosphorylates and activates LATS1/2 in complex with its regulatory protein MOB1, which in turn phosphorylates and inactivates YAP1 oncoprotein and WWTR1/TAZ. Acts by mediating gene expression of YAP1 and WWTR1/TAZ, thereby regulating cell proliferation, migration and epithelial mesenchymal transition (EMT) induction. Binds to the SPH and GT-IIC 'enhansons' (5'-GTGGAATGT-3'). May be involved in the gene regulation of neural development. Binds to the M-CAT motif. The polypeptide is Transcriptional enhancer factor TEF-4 (TEAD2) (Homo sapiens (Human)).